Consider the following 193-residue polypeptide: Dual-action ribosomal maturation protein DarP (193 aa).

Basic and acidic residues predominate over residues 1–10 (MRGRDEETGE). 2 disordered regions span residues 1-20 (MRGRDEETGEFRGASRSQQR) and 171-193 (QEQGLESGDSELEDGESASEDDE). Acidic residues predominate over residues 178-193 (GDSELEDGESASEDDE).

It belongs to the DarP family.

The protein resides in the cytoplasm. Member of a network of 50S ribosomal subunit biogenesis factors which assembles along the 30S-50S interface, preventing incorrect 23S rRNA structures from forming. Promotes peptidyl transferase center (PTC) maturation. This Xanthomonas axonopodis pv. citri (strain 306) protein is Dual-action ribosomal maturation protein DarP.